The chain runs to 265 residues: Undecaprenyl-diphosphatase (265 aa).

Transmembrane regions (helical) follow at residues 38–58 (SDMF…IIYW), 80–100 (LIVA…LGFE), 107–127 (PIAW…WAAA), 135–155 (ITWL…VFPG), 175–195 (AAAT…ASGY), 213–233 (ALAI…KWLL), and 244–264 (FAIY…SGLI).

It belongs to the UppP family.

Its subcellular location is the cell inner membrane. The catalysed reaction is di-trans,octa-cis-undecaprenyl diphosphate + H2O = di-trans,octa-cis-undecaprenyl phosphate + phosphate + H(+). Functionally, catalyzes the dephosphorylation of undecaprenyl diphosphate (UPP). Confers resistance to bacitracin. This chain is Undecaprenyl-diphosphatase, found in Rhizobium etli (strain CIAT 652).